Consider the following 361-residue polypeptide: Isopentenyl-diphosphate delta-isomerase (361 aa).

12 to 13 (RK) contributes to the substrate binding site. FMN-binding positions include serine 70, 71–73 (SMT), serine 101, and asparagine 130. 101-103 (SMR) contributes to the substrate binding site. Glutamine 165 contacts substrate. Glutamate 166 is a Mg(2+) binding site. FMN contacts are provided by residues lysine 197 and 310–311 (AG).

The protein belongs to the IPP isomerase type 2 family. As to quaternary structure, homooctamer. Dimer of tetramers. The cofactor is FMN. NADPH serves as cofactor. Mg(2+) is required as a cofactor.

The protein localises to the cytoplasm. It catalyses the reaction isopentenyl diphosphate = dimethylallyl diphosphate. Its function is as follows. Involved in the biosynthesis of isoprenoids. Catalyzes the 1,3-allylic rearrangement of the homoallylic substrate isopentenyl (IPP) to its allylic isomer, dimethylallyl diphosphate (DMAPP). In Chlorobium luteolum (strain DSM 273 / BCRC 81028 / 2530) (Pelodictyon luteolum), this protein is Isopentenyl-diphosphate delta-isomerase.